A 312-amino-acid chain; its full sequence is tRNA dimethylallyltransferase (312 aa).

12–19 (GPTAIGKS) contacts ATP. Residue 14–19 (TAIGKS) coordinates substrate. Interaction with substrate tRNA regions lie at residues 38–41 (DSKL) and 162–166 (QRVLR).

The protein belongs to the IPP transferase family. In terms of assembly, monomer. Mg(2+) serves as cofactor.

It carries out the reaction adenosine(37) in tRNA + dimethylallyl diphosphate = N(6)-dimethylallyladenosine(37) in tRNA + diphosphate. Functionally, catalyzes the transfer of a dimethylallyl group onto the adenine at position 37 in tRNAs that read codons beginning with uridine, leading to the formation of N6-(dimethylallyl)adenosine (i(6)A). The chain is tRNA dimethylallyltransferase from Buchnera aphidicola subsp. Cinara cedri (strain Cc).